The following is a 124-amino-acid chain: Chemotaxis protein CheY1 (124 aa).

A Response regulatory domain is found at 2 to 120 (KLLVVDDSST…VLKEKLEVVL (119 aa)). Mg(2+) contacts are provided by Asp-7, Asp-8, Asp-53, and Asn-55. A 4-aspartylphosphate modification is found at Asp-53.

As to quaternary structure, interacts (when phosphorylated) with FliM. Mg(2+) is required as a cofactor. Post-translationally, phosphorylated by CheAY. Dephosphorylated (inactivated) by CheZ.

Its subcellular location is the cytoplasm. Functionally, chemotactic response regulator protein that modulates the rotation direction of bacterial flagellar motors. Plays an important role in the colonization and infection of Helicobacter pylori. Upon phosphorylation by CheA, interacts with the flagellar motor protein FliM to cause clockwise flagellar rotation and bacterial reversals, as opposed to straight swimming when CheY1 is not phosphorylated. The protein is Chemotaxis protein CheY1 (cheY1) of Helicobacter pylori (strain J99 / ATCC 700824) (Campylobacter pylori J99).